The chain runs to 258 residues: Type III pantothenate kinase (258 aa).

ATP is bound at residue 6–13; sequence DVGNTNTV. Substrate is bound by residues Y100 and 107–110; that span reads GADR. The active-site Proton acceptor is the D109. D129 contacts K(+). T132 contributes to the ATP binding site. T184 is a substrate binding site.

It belongs to the type III pantothenate kinase family. As to quaternary structure, homodimer. NH4(+) is required as a cofactor. K(+) serves as cofactor.

The protein localises to the cytoplasm. The enzyme catalyses (R)-pantothenate + ATP = (R)-4'-phosphopantothenate + ADP + H(+). It functions in the pathway cofactor biosynthesis; coenzyme A biosynthesis; CoA from (R)-pantothenate: step 1/5. Catalyzes the phosphorylation of pantothenate (Pan), the first step in CoA biosynthesis. This is Type III pantothenate kinase from Geobacillus kaustophilus (strain HTA426).